A 676-amino-acid chain; its full sequence is Ion-translocating oxidoreductase complex subunit C (676 aa).

4Fe-4S ferredoxin-type domains lie at 369-397 (GEPQ…QQLY) and 407-436 (KATT…VQYF). The [4Fe-4S] cluster site is built by Cys377, Cys380, Cys383, Cys387, Cys416, Cys419, Cys422, and Cys426. The interval 600–652 (ARKLEQQQANAEPEQQVDPRKAAVEAAIARAKARKLEQQQANAEPEEQVDPRK) is disordered. Positions 605-615 (QQQANAEPEQQ) are enriched in low complexity.

It belongs to the 4Fe4S bacterial-type ferredoxin family. RnfC subfamily. The complex is composed of six subunits: RsxA, RsxB, RsxC, RsxD, RsxE and RsxG. Requires [4Fe-4S] cluster as cofactor.

It localises to the cell inner membrane. In terms of biological role, part of a membrane-bound complex that couples electron transfer with translocation of ions across the membrane. Required to maintain the reduced state of SoxR. In Escherichia coli (strain SMS-3-5 / SECEC), this protein is Ion-translocating oxidoreductase complex subunit C.